The primary structure comprises 568 residues: Nucleolar protein 58 (568 aa).

In terms of domain architecture, Nop spans 293–417; that stretch reads IAPNLTALVG…LESRLRALEH (125 aa). The segment at 430–568 is disordered; the sequence is ANGQQGRQQP…KKKKKKKKDE (139 aa). A compositionally biased stretch (basic and acidic residues) spans 471–482; the sequence is EEVKEEKDEKKD. Residues 522–533 are compositionally biased toward basic residues; it reads RKEAKKAAKAAK. Residues 534 to 544 show a composition bias toward basic and acidic residues; it reads KAAEESGDGDK.

This sequence belongs to the NOP5/NOP56 family.

It localises to the nucleus. The protein resides in the nucleolus. Required for pre-18S rRNA processing. May bind microtubules. The polypeptide is Nucleolar protein 58 (NOP58) (Cryptococcus neoformans var. neoformans serotype D (strain JEC21 / ATCC MYA-565) (Filobasidiella neoformans)).